Reading from the N-terminus, the 245-residue chain is tRNA pseudouridine synthase A (245 aa).

Catalysis depends on D52, which acts as the Nucleophile. A substrate-binding site is contributed by Y111.

Belongs to the tRNA pseudouridine synthase TruA family. As to quaternary structure, homodimer.

It catalyses the reaction uridine(38/39/40) in tRNA = pseudouridine(38/39/40) in tRNA. Functionally, formation of pseudouridine at positions 38, 39 and 40 in the anticodon stem and loop of transfer RNAs. This is tRNA pseudouridine synthase A from Rhodopseudomonas palustris (strain BisB5).